A 152-amino-acid chain; its full sequence is SsrA-binding protein (152 aa).

Belongs to the SmpB family.

It localises to the cytoplasm. Required for rescue of stalled ribosomes mediated by trans-translation. Binds to transfer-messenger RNA (tmRNA), required for stable association of tmRNA with ribosomes. tmRNA and SmpB together mimic tRNA shape, replacing the anticodon stem-loop with SmpB. tmRNA is encoded by the ssrA gene; the 2 termini fold to resemble tRNA(Ala) and it encodes a 'tag peptide', a short internal open reading frame. During trans-translation Ala-aminoacylated tmRNA acts like a tRNA, entering the A-site of stalled ribosomes, displacing the stalled mRNA. The ribosome then switches to translate the ORF on the tmRNA; the nascent peptide is terminated with the 'tag peptide' encoded by the tmRNA and targeted for degradation. The ribosome is freed to recommence translation, which seems to be the essential function of trans-translation. This is SsrA-binding protein from Helicobacter pylori (strain J99 / ATCC 700824) (Campylobacter pylori J99).